We begin with the raw amino-acid sequence, 527 residues long: Bifunctional purine biosynthesis protein PurH (527 aa).

The region spanning 8 to 156 (AGAKRPIRRA…KNHPSVAVVV (149 aa)) is the MGS-like domain.

Belongs to the PurH family.

It carries out the reaction (6R)-10-formyltetrahydrofolate + 5-amino-1-(5-phospho-beta-D-ribosyl)imidazole-4-carboxamide = 5-formamido-1-(5-phospho-D-ribosyl)imidazole-4-carboxamide + (6S)-5,6,7,8-tetrahydrofolate. The enzyme catalyses IMP + H2O = 5-formamido-1-(5-phospho-D-ribosyl)imidazole-4-carboxamide. The protein operates within purine metabolism; IMP biosynthesis via de novo pathway; 5-formamido-1-(5-phospho-D-ribosyl)imidazole-4-carboxamide from 5-amino-1-(5-phospho-D-ribosyl)imidazole-4-carboxamide (10-formyl THF route): step 1/1. It functions in the pathway purine metabolism; IMP biosynthesis via de novo pathway; IMP from 5-formamido-1-(5-phospho-D-ribosyl)imidazole-4-carboxamide: step 1/1. This Mycobacterium sp. (strain JLS) protein is Bifunctional purine biosynthesis protein PurH.